A 301-amino-acid polypeptide reads, in one-letter code: Mitochondrial substrate carrier family protein Z (301 aa).

The Mitochondrial intermembrane portion of the chain corresponds to 1–19; sequence MTGKEENKQQQHVNFPWKR. 3 Solcar repeats span residues 14-101, 116-200, and 210-293; these read NFPW…FTEQ, QQFG…ISDY, and LPVW…VMGI. A helical transmembrane segment spans residues 20–37; sequence LVAGAVAGTADVWACHPL. The Mitochondrial matrix segment spans residues 38 to 65; that stretch reads DRIKTQLQNNPGKSIVGTFGDIVSKGKG. Residues 66–86 traverse the membrane as a helical segment; the sequence is FTGGVNALYEGILPMTAEAIF. Residues 87-117 are Mitochondrial intermembrane-facing; it reads KVGIRYFAFSWFTEQYKTTVYKGETLNKKQQ. Residues 118–138 form a helical membrane-spanning segment; it reads FGANLLGGAFAGTIESFVVVI. At 139–174 the chain is on the mitochondrial matrix side; sequence PCELLKVRHMTQEHNKSFGTVFRDVLREEGFQGLYK. The helical transmembrane segment at 175-191 threads the bilayer; that stretch reads GGSATLLRQITNHMIRF. The Mitochondrial intermembrane segment spans residues 192-212; the sequence is PTFYAISDYLKGGDHSVHLPV. Residues 213-229 traverse the membrane as a helical segment; it reads WQNLSAGAIAGTASTLF. The Mitochondrial matrix portion of the chain corresponds to 230–275; it reads NNPLDTIKTRMQKQGQNQTTMQVVRGIYQETGVKGYWAGVIPRILR. Residues 276–296 form a helical membrane-spanning segment; it reads VAPGQAITWAVVELVMGILEP. The Mitochondrial intermembrane portion of the chain corresponds to 297–301; that stretch reads SSKKH.

The protein belongs to the mitochondrial carrier (TC 2.A.29) family.

Its subcellular location is the mitochondrion inner membrane. In terms of biological role, mitochondrial solute carriers shuttle metabolites, nucleotides, and cofactors through the mitochondrial inner membrane. The protein is Mitochondrial substrate carrier family protein Z (mcfZ) of Dictyostelium discoideum (Social amoeba).